The following is a 3926-amino-acid chain: Hybrid PKS-NRPS synthetase LUC5 (3926 aa).

Positions 8 to 439 constitute a Ketosynthase family 3 (KS3) domain; that stretch reads REPIAIVGTA…GTNAHAIIES (432 aa). Residues Cys-181, His-318, and His-359 each act as for beta-ketoacyl synthase activity in the active site. Positions 545–863 are malonyl-CoA:ACP transacylase (MAT) domain; that stretch reads VFTGQGAQWP…QGALTRNVHD (319 aa). Residues 932-1065 form an N-terminal hotdog fold region; that stretch reads HPLLGTRSTE…GHLRVDFGSE (134 aa). A dehydratase (DH) domain region spans residues 932–1225; sequence HPLLGTRSTE…GLTCTSLLRP (294 aa). The PKS/mFAS DH domain maps to 932–1228; that stretch reads HPLLGTRSTE…CTSLLRPGPS (297 aa). His-964 functions as the Proton acceptor; for dehydratase activity in the catalytic mechanism. Residues 1081 to 1228 are C-terminal hotdog fold; sequence LTSVNIERFY…CTSLLRPGPS (148 aa). Asp-1138 (proton donor; for dehydratase activity) is an active-site residue. The tract at residues 1344–1572 is C-methyltransferase (CMeT) domain; it reads IRAVGENLTE…VNDFYDPSKY (229 aa). The segment at 2091 to 2265 is ketoreductase (KR) domain 1; the sequence is TYLLAGCTGG…AASVIHIGMI (175 aa). In terms of domain architecture, Carrier 1 spans 2371-2448; the sequence is EMLEVVEEEF…EICSTAVASL (78 aa). Ser-2408 carries the post-translational modification O-(pantetheine 4'-phosphoryl)serine. Polar residues predominate over residues 2474–2506; the sequence is VSGNGSSSSRAPTEFNSSTLKSGAQSTQGTSVS. The tract at residues 2474-2518 is disordered; that stretch reads VSGNGSSSSRAPTEFNSSTLKSGAQSTQGTSVSGDKDTNSVDGSA. Residues 2507–2518 show a composition bias toward basic and acidic residues; the sequence is GDKDTNSVDGSA. The condensation stretch occupies residues 2525-2810; that stretch reads PLSFAQERIW…VNLLPLRFQL (286 aa). The segment at 2979–3389 is adenylation; sequence DWVKRQPDAI…RIAGDSQIKL (411 aa). The Carrier 2 domain maps to 3501-3580; that stretch reads ETLTTTQERL…GMAAKIDGST (80 aa). An O-(pantetheine 4'-phosphoryl)serine modification is found at Ser-3540. Positions 3619–3840 are thiolester reductase (TE) domain; the sequence is LTGATGFLGL…DFVPVEQVAD (222 aa).

The protein in the C-terminal section; belongs to the NRP synthetase family.

It functions in the pathway mycotoxin biosynthesis. Its function is as follows. Hybrid PKS-NRPS synthetase; part of the gene cluster that mediates the biosynthesis of the mycotoxin lucilactaene and the lucilactaene-related compound NG-391 that act as cell cycle inhibitors with potent growth inhibitory activity against malarial parasites, moderate growth inhibitory activity against cancer cells, and no activity against bacteria and fungi. The hybrid PKS-NRPS synthetase LUC5 is responsible for the condensation of one acetyl-coenzyme A (CoA) unit with six malonyl-CoA units and the amide linkage of the arising heptaketide and homoserine, subsequently releasing the first intermediate prelucilactaene B, as an alcohol with an open ring structure. Lucilactaene and NG-391 lack the 7-methyl group present in fusarins which is inserted in fusarins by the C-methyltransferase (CMeT) domain of the fusarin synthetase FUS1, suggesting that the CMet domain of LUC5 does not methylate this position. Within the pathway, both the cytochrome P450 monooxygenase LUC2 and the hydrolase LUC6 function in parallel in modification of prelucilactaene B. LUC6 may catalyze the 2-pyrrolidone ring formation to form prelucilactaene C from prelucilactaene B, followed by C-15 hydroxylation by the same enzyme to give prelucilactaene D, which is then converted to prelucilactaene E by epoxidation, and finally to prelucilactaene F by cyclization. Prelucilactane D, prelucilactaene E, and prelucilactaene F can be converted to dihydrolucilactaene, NG391, and lucilactaene, respectively, via C-20 methyl group hydroxylation by the cytochrome P450 monooxygenase LUC2. However, LUC2, unlike FUS8 in fusarin C biosynthesis, is not enough for the full oxidation of the C-20 methyl group into carboxylic acid, which is a prerequisite for the final methylation step. The aldehyde dehydrogenase LUC3 is involved in the biosynthesis by further oxidation of the C-20 alcoholic analog prelucilactaene G into a carboxylic derivative. This unidentified carboxylic derivative may be converted to demethyllucilactaene. As the last step, the methyltransferase LUC1 methylates the hydroxyl group at C-21 of demethyllucilactaene to generate lucilactaene. This is Hybrid PKS-NRPS synthetase LUC5 from Fusarium sp.